The following is a 129-amino-acid chain: Small ribosomal subunit protein uS11c (129 aa).

The protein belongs to the universal ribosomal protein uS11 family. As to quaternary structure, part of the 30S ribosomal subunit.

The protein resides in the plastid. It is found in the chloroplast. This is Small ribosomal subunit protein uS11c from Cyanidium caldarium (Red alga).